Consider the following 277-residue polypeptide: Large ribosomal subunit protein uL2c (277 aa).

The tract at residues 225–277 (MNPCDHPHGGGEGRSPIGRPKPVTPWGKPALGKKTRSPKRFSNKYIIRSRKMV) is disordered. The span at 255 to 277 (LGKKTRSPKRFSNKYIIRSRKMV) shows a compositional bias: basic residues.

The protein belongs to the universal ribosomal protein uL2 family. In terms of assembly, part of the 50S ribosomal subunit.

Its subcellular location is the plastid. The protein localises to the chloroplast. The sequence is that of Large ribosomal subunit protein uL2c (rpl2) from Euglena gracilis.